Reading from the N-terminus, the 626-residue chain is Janus kinase and microtubule-interacting protein 1 (626 aa).

The segment at 1-25 (MSKKGRSKGDKPEAETDSVQMANEE) is disordered. The segment at 1–365 (MSKKGRSKGD…KLKSLTRENV (365 aa)) is mediates association with microtubules. 2 coiled-coil regions span residues 13 to 255 (EAET…EAER) and 284 to 413 (ERDV…DDLS). Positions 365–626 (VEMKEKLSAQ…ILFEPKLKFM (262 aa)) are mediates interaction with TYK2 and GABBR1. S382 is subject to Phosphoserine. Residues 452 to 461 (ETLSETSYNT) show a composition bias toward polar residues. The segment at 452-481 (ETLSETSYNTDRTDRTPATPEEDLDETTTR) is disordered. Residue T470 is modified to Phosphothreonine. A coiled-coil region spans residues 490–604 (QLTREYQALQ…EFRVLELEVR (115 aa)).

This sequence belongs to the JAKMIP family. In terms of assembly, homodimer. Interacts with JAK1 and TYK2. Forms a complex with GABBR1 and KIF5B/kinesin-1. In terms of processing, phosphorylated.

The protein localises to the cytoplasm. It localises to the cytoskeleton. It is found in the membrane. Functionally, associates with microtubules and may play a role in the microtubule-dependent transport of the GABA-B receptor. May play a role in JAK1 signaling and regulate microtubule cytoskeleton rearrangements. The protein is Janus kinase and microtubule-interacting protein 1 (Jakmip1) of Mus musculus (Mouse).